Here is a 105-residue protein sequence, read N- to C-terminus: Thioredoxin (105 aa).

The Thioredoxin domain maps to 2–105 (VKQIESKYAF…KLEATINELI (104 aa)). At K3 the chain carries N6-acetyllysine. K8 is subject to N6-succinyllysine. Residues C32 and C35 each act as nucleophile in the active site. C32 and C35 form a disulfide bridge. N6-acetyllysine is present on K39. S-nitrosocysteine is present on residues C62 and C69. At C73 the chain carries S-nitrosocysteine; alternate. Position 94 is an N6-acetyllysine; alternate (K94). At K94 the chain carries N6-succinyllysine; alternate.

It belongs to the thioredoxin family. In terms of assembly, homodimer; disulfide-linked. Interacts with TXNIP through the redox-active site. Interacts with MAP3K5 and CASP3. Interacts with APEX1; the interaction stimulates the FOS/JUN AP-1 DNA-binding activity in a redox-dependent manner. In terms of processing, in the fully reduced protein, both Cys-69 and Cys-73 are nitrosylated in response to nitric oxide (NO). When two disulfide bonds are present in the protein, only Cys-73 is nitrosylated. Cys-73 can serve as donor for nitrosylation of target proteins.

It is found in the nucleus. Its subcellular location is the cytoplasm. The protein localises to the secreted. Functionally, participates in various redox reactions through the reversible oxidation of its active center dithiol to a disulfide and catalyzes dithiol-disulfide exchange reactions. Plays a role in the reversible S-nitrosylation of cysteine residues in target proteins, and thereby contributes to the response to intracellular nitric oxide. Nitrosylates the active site Cys of CASP3 in response to nitric oxide (NO), and thereby inhibits caspase-3 activity. Induces the FOS/JUN AP-1 DNA binding activity in ionizing radiation (IR) cells through its oxidation/reduction status and stimulates AP-1 transcriptional activity. This chain is Thioredoxin (TXN), found in Ovis aries (Sheep).